The chain runs to 683 residues: MAKKPKNSPEKSKYSSDTSSSLYSQTWLASVVIIGLLVGYINYQHVYTLFENDKHFSHLADFEREMAYRTEMGLYYSYYKTIINAPSFLEGVQEITHDTVTEHGHEINTLNRFNLYPEVILAFLYRPFRAFAKSANWQIELCWQVNRGELRPVESCEGIGNPHYFYITGVFIVAGTVASSIFYLGVLVSDSIFGGFLSVLCFAFNHGEATRVQWTPPLRESFAFPFIIGHIAILTFVIKYKKSGHSMILLLTSMAVPALLFWQFTQFAFFTQICSIFLAFSLDLIPFSTAKTVIHSHIISFLIGFLLLFGNEMMITALYFPSILALGMIIYISPLLSNLKFRPAYVLFLAIIFASITLGLKIGLSKGLGIEDDAHIFDILRSKFTSFANFHTRLYTCSAEFDFIQYSTIEKLCGTLLIPLALISLVTFVFNFVKNTNLLWRNSEEIGENGEILYNVVQLCCSTVMAFLIMRLKLFMTPHLCIVAALFANSKLLGGDRISKTIRVSALVGVIAILFYRGIPNIRQQLNVKGEYSNPDQEMLFDWIQHNTKQDAVFAGTMPVMANVKLTTLRPIVNHPHYEHVGIRERTLKVYSMFSKKPIAEVHKIMKEMGVNYFVFQLMNCSNDERRPECVYRGMWDEEDPKNSGRTALCDLWILAANSKDNSRIAPFKIVYNANRNYIVLKI.

The next 11 helical transmembrane spans lie at 21–41 (SLYS…VGYI), 167–187 (ITGV…LGVL), 188–208 (VSDS…NHGE), 220–240 (ESFA…VIKY), 267–287 (FAFF…LIPF), 298–318 (IISF…ITAL), 319–339 (YFPS…LSNL), 344–364 (AYVL…KIGL), 413–433 (CGTL…FNFV), 467–487 (FLIM…AALF), and 502–522 (IRVS…IPNI).

This sequence belongs to the dpy-19 family. Expressed faintly in neuroblasts QL and QR, more strongly in the neighboring epidermal cells (dorsal hyp7 cells, ventral P cells and lateral V cells), and in dorsal and ventral body muscle cells.

It is found in the endoplasmic reticulum membrane. In terms of biological role, C-mannosyltransferase that mediates C-mannosylation of tryptophan residues on target proteins such as unc-5 and mig-21. Mediates the attachment of alpha-mannose in C-C linkage to the C2 of the indole ring of tryptophan. C-mannosylation takes place in the endoplasmic reticulum and frequently found in thrombospondin (TSP) type-1 repeats and in the WSXWS motif of type I cytokine receptors. Required to orient neuroblasts QL and QR correctly on the anterior/posterior (A/P) axis: QL and QR are born in the same A/P position, but polarize and migrate left/right asymmetrically, QL migrates toward the posterior and QR migrates toward the anterior. Required with unc-40 to express mab-5 correctly in the Q cell descendants. This Caenorhabditis elegans protein is C-mannosyltransferase dpy-19 (dpy-19).